Here is a 162-residue protein sequence, read N- to C-terminus: MALRMWASSTANALRLSSATRPHFSPLSRCFSSVLDGLKYANSHEWVKHEGSVATIGITDHAQDHLGEVVFVDLPEAGGSVTKATGFGAVESVKATSDVNSPISGEIVEVNSKLSETPGLINSSPYEDGWMIKVKPSNPSELDSLMGAKEYTKFCEEEDAAH.

The transit peptide at 1–31 (MALRMWASSTANALRLSSATRPHFSPLSRCF) directs the protein to the mitochondrion. Residues 53 to 135 (VATIGITDHA…YEDGWMIKVK (83 aa)) form the Lipoyl-binding domain. An N6-lipoyllysine modification is found at K94.

Belongs to the GcvH family. As to quaternary structure, the glycine cleavage system is composed of four proteins: P, T, L and H. The cofactor is (R)-lipoate.

Its subcellular location is the mitochondrion. Functionally, the glycine cleavage system catalyzes the degradation of glycine. The H protein shuttles the methylamine group of glycine from the P protein to the T protein. The protein is Glycine cleavage system H protein, mitochondrial (GDCSH) of Flaveria anomala (Yellowtops).